We begin with the raw amino-acid sequence, 600 residues long: Glutamine--fructose-6-phosphate aminotransferase [isomerizing] (600 aa).

The active-site Nucleophile; for GATase activity is Cys2. Residues 2–217 (CGIVGYIGQN…DKEIVLVSRN (216 aa)) form the Glutamine amidotransferase type-2 domain. SIS domains lie at 283 to 422 (IRTA…VKGL) and 452 to 590 (LARD…VDKP). The active-site For Fru-6P isomerization activity is Lys595.

As to quaternary structure, homodimer.

Its subcellular location is the cytoplasm. The catalysed reaction is D-fructose 6-phosphate + L-glutamine = D-glucosamine 6-phosphate + L-glutamate. Its function is as follows. Catalyzes the first step in hexosamine metabolism, converting fructose-6P into glucosamine-6P using glutamine as a nitrogen source. In Oceanobacillus iheyensis (strain DSM 14371 / CIP 107618 / JCM 11309 / KCTC 3954 / HTE831), this protein is Glutamine--fructose-6-phosphate aminotransferase [isomerizing].